The primary structure comprises 339 residues: Heat-inducible transcription repressor HrcA (339 aa).

The protein belongs to the HrcA family.

Its function is as follows. Negative regulator of class I heat shock genes (grpE-dnaK-dnaJ and groELS operons). Prevents heat-shock induction of these operons. The polypeptide is Heat-inducible transcription repressor HrcA (Clostridium perfringens (strain ATCC 13124 / DSM 756 / JCM 1290 / NCIMB 6125 / NCTC 8237 / Type A)).